The primary structure comprises 939 residues: Aconitate hydratase A (939 aa).

Residues 433–453 (GSGESLATGAEGRPSKPVTVA) form a disordered region. Positions 475, 541, and 544 each coordinate [4Fe-4S] cluster.

This sequence belongs to the aconitase/IPM isomerase family. Monomer. Requires [4Fe-4S] cluster as cofactor.

The catalysed reaction is citrate = D-threo-isocitrate. It carries out the reaction (2S,3R)-3-hydroxybutane-1,2,3-tricarboxylate = 2-methyl-cis-aconitate + H2O. It functions in the pathway carbohydrate metabolism; tricarboxylic acid cycle; isocitrate from oxaloacetate: step 2/2. Its pathway is organic acid metabolism; propanoate degradation. Involved in the catabolism of short chain fatty acids (SCFA) via the tricarboxylic acid (TCA)(acetyl degradation route) and probably via the 2-methylcitrate cycle I (propionate degradation route). Catalyzes the reversible isomerization of citrate to isocitrate via cis-aconitate. Could catalyze the hydration of 2-methyl-cis-aconitate to yield (2R,3S)-2-methylisocitrate. The apo form of AcnA functions as a RNA-binding regulatory protein. The protein is Aconitate hydratase A (acn) of Corynebacterium glutamicum (strain ATCC 13032 / DSM 20300 / JCM 1318 / BCRC 11384 / CCUG 27702 / LMG 3730 / NBRC 12168 / NCIMB 10025 / NRRL B-2784 / 534).